The primary structure comprises 240 residues: 7-cyano-7-deazaguanine synthase (240 aa).

9–19 (FSGGLDSTACL) provides a ligand contact to ATP. Residues cysteine 195, cysteine 210, cysteine 213, and cysteine 216 each contribute to the Zn(2+) site.

The protein belongs to the QueC family. It depends on Zn(2+) as a cofactor.

It catalyses the reaction 7-carboxy-7-deazaguanine + NH4(+) + ATP = 7-cyano-7-deazaguanine + ADP + phosphate + H2O + H(+). Its pathway is purine metabolism; 7-cyano-7-deazaguanine biosynthesis. Functionally, catalyzes the ATP-dependent conversion of 7-carboxy-7-deazaguanine (CDG) to 7-cyano-7-deazaguanine (preQ(0)). The chain is 7-cyano-7-deazaguanine synthase from Pyrococcus furiosus (strain ATCC 43587 / DSM 3638 / JCM 8422 / Vc1).